An 818-amino-acid chain; its full sequence is Serine/threonine-protein phosphatase 4 regulatory subunit 3 (818 aa).

One can recognise a WH1 domain in the interval 1–100; that stretch reads MTDTRRRVKV…DEIWEKICQV (100 aa). The tract at residues 718-818 is disordered; it reads LAKSSFSGRQ…PPSKKSRLSS (101 aa). Residues 721 to 730 are compositionally biased toward polar residues; the sequence is SSFSGRQNPS. The span at 736–756 shows a compositional bias: low complexity; the sequence is SGSTKTSLSSPPPSASLSPGS. Over residues 788-804 the composition is skewed to acidic residues; that stretch reads YPDDDEEEEDDDDEESK.

This sequence belongs to the SMEK family. In terms of assembly, serine/threonine-protein phosphatase 4 (PP4) occurs in different assemblies of the catalytic and one or more regulatory subunits.

Its function is as follows. Regulatory subunit of serine/threonine-protein phosphatase 4. In Tetraodon nigroviridis (Spotted green pufferfish), this protein is Serine/threonine-protein phosphatase 4 regulatory subunit 3 (smek1).